The following is a 176-amino-acid chain: Translation initiation factor IF-3 (176 aa).

It belongs to the IF-3 family. Monomer.

Its subcellular location is the cytoplasm. Its function is as follows. IF-3 binds to the 30S ribosomal subunit and shifts the equilibrium between 70S ribosomes and their 50S and 30S subunits in favor of the free subunits, thus enhancing the availability of 30S subunits on which protein synthesis initiation begins. This chain is Translation initiation factor IF-3, found in Nitratidesulfovibrio vulgaris (strain ATCC 29579 / DSM 644 / CCUG 34227 / NCIMB 8303 / VKM B-1760 / Hildenborough) (Desulfovibrio vulgaris).